Reading from the N-terminus, the 698-residue chain is MQAHELLQYFRLPELVDIRQYVRTLPTNTLMGFGAFAALTTFWYATRPKALKPPCDLSMQSVEVAGSDGARRSTLLDSDEPLVYFYDDVRTLYDVFQRGIQVSNNGPCLGSRKPDQPYEWLSYKQVEDLSECIGSALLQKGFQASPDQFIGIFAQNRPEWVIIEQACFAYSMVVVPLYDTLGADAITYIVNKAELSVIFADKPEKARILLESVENKLTPGLKIIVVMDSYGSELVEQGKKCGVEVISLKAMEGLGRANRRKPKPPEPDDLAVICFTSGTTGNPKGAMITHKNVVSDCSAFVKATEKALVLNASDIHISFLPLAHMYEQLLQCVMLCHGAKIGFFQGDIRLLMDDLKALQPTIFPVVPRLLNRMFDRIFAQANTTVKRWLLDFASKRKEAELRSGIIRNNSVWDKLIFHKIQSSLGGKVRLMVTGAAPVSATVLTFLRAALGCQFYEGYGQTECTAGCSLSVPGDWTAGHVGAPMPCNFIKLVDVEEMNYMAAMGEGEVCVKGPNVFKGYLKDPAKTAEALDKDGWLHTGDIGKWLPNGTLKIIDRKKHIFKLAQGEYIAPEKIENIYVRSEPVAQVFVHGESLQAFLIAIVVPDAESLASWARKRGFEGSFEELCRNKDVKKAILEDMVRIGKDSGLKSFEQVRGIALHPELFSVDNGLLTPTMKAKRPELRNYFRSQIDELYSTIKV.

N-acetylmethionine is present on Met-1. A 3'-nitrotyrosine modification is found at Tyr-9. The residue at position 84 (Tyr-84) is a Phosphotyrosine. O-linked (GlcNAc) serine glycosylation occurs at Ser-135. N6-acetyllysine is present on residues Lys-356 and Lys-386. Phosphoserine is present on Ser-620. Residue Lys-632 is modified to N6-acetyllysine.

It belongs to the ATP-dependent AMP-binding enzyme family. Mg(2+) is required as a cofactor.

The protein resides in the microsome membrane. It is found in the mitochondrion outer membrane. Its subcellular location is the peroxisome membrane. The protein localises to the endoplasmic reticulum membrane. The catalysed reaction is a long-chain fatty acid + ATP + CoA = a long-chain fatty acyl-CoA + AMP + diphosphate. It carries out the reaction (5Z,8Z,11Z,14Z)-eicosatetraenoate + ATP + CoA = (5Z,8Z,11Z,14Z)-eicosatetraenoyl-CoA + AMP + diphosphate. The enzyme catalyses 3,7,11,15-tetramethylhexadecanoate + ATP + CoA = phytanoyl-CoA + AMP + diphosphate. It catalyses the reaction hexadecanoate + ATP + CoA = hexadecanoyl-CoA + AMP + diphosphate. The catalysed reaction is (E)-hexadec-2-enoate + ATP + CoA = (2E)-hexadecenoyl-CoA + AMP + diphosphate. It carries out the reaction 2,6,10,14-tetramethylpentadecanoate + ATP + CoA = pristanoyl-CoA + AMP + diphosphate. The enzyme catalyses 14,15-epoxy-(5Z,8Z,11Z)-eicosatrienoate + ATP + CoA = 14,15-epoxy-(5Z,8Z,11Z)-eicosatrienoyl-CoA + AMP + diphosphate. It catalyses the reaction 5-hydroxy-(6E,8Z,11Z,14Z)-eicosatetraenoate + ATP + CoA = 5-hydroxy-(6E,8Z,11Z,14Z)-eicosatetraenoyl-CoA + AMP + diphosphate. The catalysed reaction is 12-hydroxy-(5Z,8Z,10E,14Z)-eicosatetraenoate + ATP + CoA = 12-hydroxy-(5Z,8Z,10E,14Z)-eicosatetraenoyl-CoA + AMP + diphosphate. It carries out the reaction 15-hydroxy-(5Z,8Z,11Z,13E)-eicosatetraenoate + ATP + CoA = 15-hydroxy-(5Z,8Z,11Z,13E)-eicosatetraenoyl-CoA + AMP + diphosphate. The enzyme catalyses (9Z)-octadecenoate + ATP + CoA = (9Z)-octadecenoyl-CoA + AMP + diphosphate. With respect to regulation, inhibited at high temperature and by arachidonate. Its function is as follows. Catalyzes the conversion of long-chain fatty acids to their active form acyl-CoAs for both synthesis of cellular lipids, and degradation via beta-oxidation. Preferentially uses palmitoleate, oleate and linoleate. Preferentially activates arachidonate than epoxyeicosatrienoic acids (EETs) or hydroxyeicosatrienoic acids (HETEs). The polypeptide is Long-chain-fatty-acid--CoA ligase 1 (Cavia porcellus (Guinea pig)).